Consider the following 471-residue polypeptide: ATP synthase subunit beta (471 aa).

Residue 153-160 (GGAGVGKT) participates in ATP binding.

It belongs to the ATPase alpha/beta chains family. F-type ATPases have 2 components, CF(1) - the catalytic core - and CF(0) - the membrane proton channel. CF(1) has five subunits: alpha(3), beta(3), gamma(1), delta(1), epsilon(1). CF(0) has four main subunits: a(1), b(1), b'(1) and c(9-12).

It is found in the cell membrane. The enzyme catalyses ATP + H2O + 4 H(+)(in) = ADP + phosphate + 5 H(+)(out). Its function is as follows. Produces ATP from ADP in the presence of a proton gradient across the membrane. The catalytic sites are hosted primarily by the beta subunits. This Roseiflexus sp. (strain RS-1) protein is ATP synthase subunit beta.